The primary structure comprises 532 residues: Membrane protein insertase YidC (532 aa).

Helical transmembrane passes span 6 to 26 (IVLAIILSLVVFLGWHSFAEY), 317 to 337 (AIDFGMFSIIAKPLLTALTFF), 342 to 362 (GNWGVAIIVLTLCIKIVFWPL), 411 to 431 (GGCLPILLQIPVFIGLYQALL), 451 to 473 (VWLADLSAADPFYITPLLMGASM), and 496 to 516 (PIIFTVMFLNFPAGLVIYWLF).

Belongs to the OXA1/ALB3/YidC family. Type 1 subfamily. In terms of assembly, interacts with the Sec translocase complex via SecD. Specifically interacts with transmembrane segments of nascent integral membrane proteins during membrane integration.

The protein resides in the cell membrane. In terms of biological role, required for the insertion and/or proper folding and/or complex formation of integral membrane proteins into the membrane. Involved in integration of membrane proteins that insert both dependently and independently of the Sec translocase complex, as well as at least some lipoproteins. Aids folding of multispanning membrane proteins. This chain is Membrane protein insertase YidC, found in Lawsonia intracellularis (strain PHE/MN1-00).